The primary structure comprises 239 residues: N-glycosylase/DNA lyase (239 aa).

3 residues coordinate 8-oxoguanine: Gln24, Ser51, and Trp62. The helix-hairpin-helix stretch occupies residues 118–182; it reads ERYYEDMTLL…EDVRIIKLTR (65 aa). The active-site Schiff-base intermediate with DNA is the Lys142. Residues Phe146 and Pro172 each contribute to the 8-oxoguanine site. Asp174 is a catalytic residue. Residues Asp208 and Trp212 each coordinate 8-oxoguanine.

This sequence belongs to the archaeal N-glycosylase/DNA lyase (AGOG) family.

It catalyses the reaction 2'-deoxyribonucleotide-(2'-deoxyribose 5'-phosphate)-2'-deoxyribonucleotide-DNA = a 3'-end 2'-deoxyribonucleotide-(2,3-dehydro-2,3-deoxyribose 5'-phosphate)-DNA + a 5'-end 5'-phospho-2'-deoxyribonucleoside-DNA + H(+). Its function is as follows. DNA repair enzyme that is part of the base excision repair (BER) pathway; protects from oxidative damage by removing the major product of DNA oxidation, 8-oxoguanine (GO), from single- and double-stranded DNA substrates. This is N-glycosylase/DNA lyase from Pyrococcus horikoshii (strain ATCC 700860 / DSM 12428 / JCM 9974 / NBRC 100139 / OT-3).